The sequence spans 483 residues: NADH-quinone oxidoreductase subunit N (483 aa).

Transmembrane regions (helical) follow at residues 11 to 31 (ALPEIIILCMAMFVLLLDLFL), 37 to 57 (SLIYIFTQLGLAAAAVVTACT), 82 to 100 (LMMYLTTSVMLVYTRQYVS), 110 to 130 (FALTLFALLGMMIMVSGQHFL), 164 to 184 (FVLGALSSGMLLYGMSMLYGV), 205 to 225 (AVLVLGVVFLIAGLGFKLGAV), 239 to 259 (PTAVTLFIGSVTKLAAFAFMI), 268 to 288 (VLAIDWQGMLAIMAVLSILIG), 301 to 321 (MLAYSTISHVGYLLYGFMSAG), 329 to 349 (MFYIMAYVLMTLGGFGIMLLL), 372 to 392 (YAFLMLIIMFSMAGVPPTLGF), 406 to 426 (GFVGLVIFAVVMAAIGGFYYL), and 446 to 466 (PIDMKVLLSLNALLLLALGMF).

Belongs to the complex I subunit 2 family. NDH-1 is composed of 14 different subunits. Subunits NuoA, H, J, K, L, M, N constitute the membrane sector of the complex.

The protein resides in the cell inner membrane. It carries out the reaction a quinone + NADH + 5 H(+)(in) = a quinol + NAD(+) + 4 H(+)(out). Its function is as follows. NDH-1 shuttles electrons from NADH, via FMN and iron-sulfur (Fe-S) centers, to quinones in the respiratory chain. The immediate electron acceptor for the enzyme in this species is believed to be ubiquinone. Couples the redox reaction to proton translocation (for every two electrons transferred, four hydrogen ions are translocated across the cytoplasmic membrane), and thus conserves the redox energy in a proton gradient. This chain is NADH-quinone oxidoreductase subunit N, found in Methylovorus glucosotrophus (strain SIP3-4).